We begin with the raw amino-acid sequence, 466 residues long: MVMEKPSPLLVGREFVRQYYTLLNQAPDMLHRFYGKNSSYVHGGLDSNGKPADAVYGQKEIHRKVMSQNFTNCHTKIRHVDAHATLNDGVVVQVMGLLSNNNQALRRFMQTFVLAPEGSVANKFYVHNDIFRYQDEVFGGFVTEPQEESEEEVEEPEERQQTPEVVPDDSGTFYDQAVVSNDMEEHLEEPVAEPEPDPEPEPEQEPVSEIQEEKPEPVLEETAPEDAQKSSSPAPADIAQTVQEDLRTFSWASVTSKNLPPSGAVPVTGIPPHVVKVPASQPRPESKPESQIPPQRPQRDQRVREQRINIPPQRGPRPIREAGEQGDIEPRRMVRHPDSHQLFIGNLPHEVDKSELKDFFQSYGNVVELRINSGGKLPNFGFVVFDDSEPVQKVLSNRPIMFRGEVRLNVEEKKTRAAREGDRRDNRLRGPGGPRGGLGGGMRGPPRGGMVQKPGFGVGRGLAPRQ.

An NTF2 domain is found at 11-133; sequence VGREFVRQYY…FYVHNDIFRY (123 aa). Residues lysine 36, lysine 50, lysine 59, lysine 64, lysine 76, and lysine 123 each participate in a glycyl lysine isopeptide (Lys-Gly) (interchain with G-Cter in ubiquitin) cross-link. Residues 142–225 are acidic disordered region; that stretch reads VTEPQEESEE…EPVLEETAPE (84 aa). Phosphothreonine is present on threonine 143. Disordered stretches follow at residues 144 to 172 and 184 to 243; these read EPQE…DSGT and EEHL…QTVQ. Composition is skewed to acidic residues over residues 145–157 and 185–206; these read PQEE…EEPE and EHLE…EQEP. The residue at position 149 (serine 149) is a Phosphoserine. Serine 231, serine 232, serine 250, and serine 253 each carry phosphoserine. Residues 255–329 are disordered; it reads TSKNLPPSGA…REAGEQGDIE (75 aa). Composition is skewed to basic and acidic residues over residues 297-307 and 318-329; these read PQRDQRVREQR and PIREAGEQGDIE. An RRM domain is found at 340 to 415; it reads HQLFIGNLPH…VRLNVEEKKT (76 aa). Glycyl lysine isopeptide (Lys-Gly) (interchain with G-Cter in ubiquitin) cross-links involve residues lysine 353 and lysine 357. Position 373 is a phosphoserine (serine 373). Lysine 376 participates in a covalent cross-link: Glycyl lysine isopeptide (Lys-Gly) (interchain with G-Cter in ubiquitin). Lysine 376 carries the N6-acetyllysine; alternate modification. A Glycyl lysine isopeptide (Lys-Gly) (interchain with G-Cter in SUMO2); alternate cross-link involves residue lysine 376. Lysine 393 is covalently cross-linked (Glycyl lysine isopeptide (Lys-Gly) (interchain with G-Cter in ubiquitin); alternate). The tract at residues 410-466 is RG-rich region; sequence VEEKKTRAAREGDRRDNRLRGPGGPRGGLGGGMRGPPRGGMVQKPGFGVGRGLAPRQ. Residues 413–428 are compositionally biased toward basic and acidic residues; that stretch reads KKTRAAREGDRRDNRL. Residues 413–466 are disordered; that stretch reads KKTRAAREGDRRDNRLRGPGGPRGGLGGGMRGPPRGGMVQKPGFGVGRGLAPRQ. Arginine 429 carries the post-translational modification Asymmetric dimethylarginine. Residues 430 to 447 show a composition bias toward gly residues; that stretch reads GPGGPRGGLGGGMRGPPR. Arginine 435 carries the asymmetric dimethylarginine; alternate modification. Arginine 435 bears the Dimethylated arginine; alternate mark. At arginine 435 the chain carries Omega-N-methylarginine; alternate. Position 447 is an omega-N-methylarginine (arginine 447). Arginine 460 is subject to Dimethylated arginine; alternate. Arginine 460 bears the Omega-N-methylarginine; alternate mark. Residue arginine 465 is modified to Omega-N-methylarginine.

As to quaternary structure, homodimer and oligomer. Component of a TAU mRNP complex, at least composed of IGF2BP1, ELAVL4 and G3BP1. Binds to the SH3 domain of Ras GTPase-activating protein (RASA1) in proliferating cells. No interaction in quiescent cells. Interacts (via NTF2 domain) with USP10; inhibiting stress granule formation by lowering G3BP1 valence. Interacts (via NTF2 domain) with CAPRIN1; promoting stress granule formation by lowering the saturation-concentration of G3BP1. Interacts (via NTF2 domain) with UBAP2L; promoting stress granule formation. Associates (via RG-rich region) with 40S ribosome subunits. Interacts with RPTOR and SPAG5; this complex is increased by oxidative stress. Interacts with ATXN2L. Interacts with STYXL1. Interacts with CGAS (via N-terminus); this interaction promotes the DNA-binding and activation of CGAS. Interacts (via C-terminus) with RIGI. Interacts with PABPC1. Interacts with QKI (isoforms QKI6 and QKI7); directing N(7)-methylguanine-containing mRNAs to stress granules. (Microbial infection) Interacts with Semliki forest virus non-structural protein 3 (via C-terminus); this interaction inhibits the formation of stress granules on viral mRNAs and the nsp3-G3BP1 complexes bind viral RNAs and probably orchestrate the assembly of viral replication complexes. In terms of assembly, (Microbial infection) Interacts with Chikungunya virus non-structural protein 3 (via C-terminus); this interaction inhibits the formation of stress granules on viral mRNAs and the nsp3-G3BP1 complexes bind viral RNAs and probably orchestrate the assembly of viral replication complexes. As to quaternary structure, (Microbial infection) Interacts with Sindbis virus non-structural protein 3 (via C-terminus); this interaction inhibits the formation of stress granules on viral mRNAs and the nsp3-G3BP1 complexes bind viral RNAs and probably orchestrate the assembly of viral replication complexes. (Microbial infection) Interacts with Zika virus capsid protein C; this interaction is probably linked to the inhibition of stress granules formation by the virus. In terms of assembly, (Microbial infection) Interacts with reovirus type 2 protein sigma-NS; this interaction induces the relocalization of G3BP1 to the outer periphery of sigma-NS/mu-Ns viral factories and is probably involved in the suppression of the integrated stress response by the virus. As to quaternary structure, (Microbial infection) Interacts with SARS-CoV-2 N protein; the interaction is enhanced by host HDAC6 which deacetylates the viral N protein and promotes N protein association with G3BP1, disrupting stress granule formation and facilitating viral replication. Interacts with HDAC6; the interaction increases during SARS-CoV-2 infection. Mg(2+) serves as cofactor. In terms of processing, phosphorylation of the acidic disordered region regulates stress granule assembly. RASA1-dependent phosphorylation of Ser-149 induces a conformational change that prevents self-association. Dephosphorylation after HRAS activation is required for stress granule assembly. Ser-149 phosphorylation induces partial nuclear localization. Ubiquitinated by TRIM21 via 'Lys-63'-linked polyubiquitination in the NTF2 domain in response to heat shock, leading to stress granule disassembly: ubiquitination promotes interaction with the FAF2 adapter, followed by interaction with VCP, which extracts G3BP1 from stress granules, leading to stress granule disassembly. In case of prolonged stress, ubiquitination by TRIM21 leads to autophagy-dependent degradation of G3BP1 via recruitment of ubiquitinated G3BP1 by SQSTM1 and/or CALCOCO2 to autophagosomes. Post-translationally, (Microbial infection) Cleaved by human enterovirus 71; this cleavage induces the disassembly of cytoplasmic stress granules. Cleaved by Foot-and-mouth disease virus; this cleavage suppresses the formation of cytoplasmic stress granules. In terms of processing, arg-435 is dimethylated, probably to asymmetric dimethylarginine. (Microbial infection) Cleaved by Encephalomyocarditis virus protease 3C; this cleavage suppresses the formation of cytoplasmic stress granules. In terms of tissue distribution, ubiquitous.

It is found in the cytoplasm. Its subcellular location is the cytosol. It localises to the perikaryon. The protein localises to the stress granule. The protein resides in the nucleus. The enzyme catalyses ATP + H2O = ADP + phosphate + H(+). With respect to regulation, under physiological conditions, G3BP1 adopts a compact state that is stabilized by intramolecular interactions between the RG-rich and the acidic regions that inhibit phase separation. Upon stress, polysomes disassemble and mRNAs are released in an unfolded protein-free state. Binding of unfolded mRNA to G3BP1 outcompetes the intramolecular interactions and RNA-bound G3BP1 adopts an expanded conformation in which the RG-rich region becomes exposed to engage in protein-protein and protein-RNA interactions, allowing physical cross-linking of RNA molecules to form protein-RNA condensates, leading to liquid-liquid phase separation (LLPS). Functionally, protein involved in various processes, such as stress granule formation and innate immunity. Plays an essential role in stress granule formation. Stress granules are membraneless compartments that store mRNAs and proteins, such as stalled translation pre-initiation complexes, in response to stress. Promotes formation of stress granules phase-separated membraneless compartment by undergoing liquid-liquid phase separation (LLPS) upon unfolded RNA-binding: functions as a molecular switch that triggers RNA-dependent LLPS in response to a rise in intracellular free RNA concentrations. Also acts as an ATP- and magnesium-dependent helicase: unwinds DNA/DNA, RNA/DNA, and RNA/RNA substrates with comparable efficiency. Acts unidirectionally by moving in the 5' to 3' direction along the bound single-stranded DNA. Unwinds preferentially partial DNA and RNA duplexes having a 17 bp annealed portion and either a hanging 3' tail or hanging tails at both 5'- and 3'-ends. Plays an essential role in innate immunity by promoting CGAS and RIGI activity. Participates in the DNA-triggered cGAS/STING pathway by promoting the DNA binding and activation of CGAS. Triggers the condensation of cGAS, a process probably linked to the formation of membrane-less organelles. Also enhances RIGI-induced type I interferon production probably by helping RIGI at sensing pathogenic RNA. May also act as a phosphorylation-dependent sequence-specific endoribonuclease in vitro: Cleaves exclusively between cytosine and adenine and cleaves MYC mRNA preferentially at the 3'-UTR. This chain is Ras GTPase-activating protein-binding protein 1, found in Homo sapiens (Human).